A 182-amino-acid chain; its full sequence is Large ribosomal subunit protein uL6 (182 aa).

This sequence belongs to the universal ribosomal protein uL6 family. Part of the 50S ribosomal subunit.

In terms of biological role, this protein binds to the 23S rRNA, and is important in its secondary structure. It is located near the subunit interface in the base of the L7/L12 stalk, and near the tRNA binding site of the peptidyltransferase center. The chain is Large ribosomal subunit protein uL6 from Methanococcus maripaludis (strain C5 / ATCC BAA-1333).